Here is a 265-residue protein sequence, read N- to C-terminus: 3-deoxy-manno-octulosonate cytidylyltransferase (265 aa).

It belongs to the KdsB family.

Its subcellular location is the cytoplasm. The catalysed reaction is 3-deoxy-alpha-D-manno-oct-2-ulosonate + CTP = CMP-3-deoxy-beta-D-manno-octulosonate + diphosphate. Its pathway is nucleotide-sugar biosynthesis; CMP-3-deoxy-D-manno-octulosonate biosynthesis; CMP-3-deoxy-D-manno-octulosonate from 3-deoxy-D-manno-octulosonate and CTP: step 1/1. It functions in the pathway bacterial outer membrane biogenesis; lipopolysaccharide biosynthesis. Activates KDO (a required 8-carbon sugar) for incorporation into bacterial lipopolysaccharide in Gram-negative bacteria. The sequence is that of 3-deoxy-manno-octulosonate cytidylyltransferase from Delftia acidovorans (strain DSM 14801 / SPH-1).